A 244-amino-acid chain; its full sequence is 14-3-3 protein beta/alpha (244 aa).

N-acetylmethionine is present on Met-1. Ser-184 is subject to Phosphoserine.

The protein belongs to the 14-3-3 family. As to quaternary structure, homodimer, and heterodimer with other family members. Post-translationally, phosphorylated.

The protein resides in the cytoplasm. Its function is as follows. Adapter protein implicated in the regulation of a large spectrum of both general and specialized signaling pathways. Binds to a large number of partners, usually by recognition of a phosphoserine or phosphothreonine motif. Binding generally results in the modulation of the activity of the binding partner. In Gallus gallus (Chicken), this protein is 14-3-3 protein beta/alpha (YWHAB).